The chain runs to 549 residues: MDLMQMDKRLDSTEQVVEEIMRIHRSLPARPGIDEVEAAKGLIDNVEKEDQACLEAIARQRKSSEVPGELFMVLQEMKKGYVQFRSKEQIREALKLLDLESVHSLFDDFIQRASNCIASPSSNGSVSSRPPLPPATTTAARSDSQSSLNFSERAPVRPKDMVSRDDSFVTKSKPSSLYSDGFAAPPRRPQILDSTLTTGNDGEKLSLIKLASLIEVSAKKATQEINLQNKLTEQLEWLPDSLGKLSSLTSLDLSENHIVVLPNTIGGLSSLTKLDLHSNRIGQLPESIGELLNLVYLNLGSNQLSSLPSAFSRLVRLEELDLSCNNLPILPESIGSLVSLKKLDVETNDIEEIPYSIGGCSSLIELRADYNKLKALPEAIGKITTLEILSVRYNNIRQLPTTMSSLASLKELDVSFNELESVPESLCFATTLVKLNIGNNFADMVSLPRSIGNLEMLEELDISNNQIRVLPDSFKMLTKLRVFRAQENPLHIPPRDIAEKGPQAVVQYMNDLVETRNAKSLMVKPKKSWVQMCFFSKSNKRKQSSMEIV.

Low complexity predominate over residues 119 to 140 (SPSSNGSVSSRPPLPPATTTAA). Residues 119-167 (SPSSNGSVSSRPPLPPATTTAARSDSQSSLNFSERAPVRPKDMVSRDDS) form a disordered region. Over residues 141-150 (RSDSQSSLNF) the composition is skewed to polar residues. The span at 154–167 (APVRPKDMVSRDDS) shows a compositional bias: basic and acidic residues. Serine 167 carries the phosphoserine modification. LRR repeat units follow at residues 245 to 268 (LSSL…IGGL), 269 to 291 (SSLT…IGEL), 293 to 313 (NLVY…AFSR), 314 to 337 (LVRL…IGSL), 339 to 360 (SLKK…IGGC), 362 to 383 (SLIE…IGKI), 384 to 406 (TTLE…MSSL), 407 to 430 (ASLK…CFAT), 432 to 454 (LVKL…IGNL), 455 to 476 (EMLE…SFKM), and 478 to 500 (TKLR…IAEK). A GVYW; degenerate motif is present at residues 501–508 (GPQAVVQY).

Belongs to the SHOC2 family. In terms of tissue distribution, widely expressed.

Leucine-rich repeat protein that likely mediates protein interactions, possibly in the context of signal transduction. The chain is Plant intracellular Ras-group-related LRR protein 4 (PIRL4) from Arabidopsis thaliana (Mouse-ear cress).